The following is an 85-amino-acid chain: Putative membrane protein insertion efficiency factor (85 aa).

Belongs to the UPF0161 family.

Its subcellular location is the cell inner membrane. Functionally, could be involved in insertion of integral membrane proteins into the membrane. This is Putative membrane protein insertion efficiency factor from Tolumonas auensis (strain DSM 9187 / NBRC 110442 / TA 4).